Consider the following 107-residue polypeptide: MEIWHVSDARLRRTRDFGVTRLEDFCFQFNYIQPRVGYCRVPLKAWCSNQGKFAAQFTLKSCEKSGQEKVITSFTAYDKTVKKAVSKLVEEAVDFIIWRATYLERNV.

This sequence belongs to the coronaviruses ns12.7 protein family.

The chain is Non-structural protein of 12.7 kDa from Rattus norvegicus (Rat).